We begin with the raw amino-acid sequence, 404 residues long: Cysteine desulfurase IscS (404 aa).

Residues 75-76 (AT), Asn-155, Gln-183, and 203-205 (SGH) each bind pyridoxal 5'-phosphate. Lys-206 carries the N6-(pyridoxal phosphate)lysine modification. Residue Thr-243 coordinates pyridoxal 5'-phosphate. The active-site Cysteine persulfide intermediate is Cys-328. Residue Cys-328 participates in [2Fe-2S] cluster binding.

The protein belongs to the class-V pyridoxal-phosphate-dependent aminotransferase family. NifS/IscS subfamily. Homodimer. Forms a heterotetramer with IscU, interacts with other sulfur acceptors. The cofactor is pyridoxal 5'-phosphate.

The protein localises to the cytoplasm. The enzyme catalyses (sulfur carrier)-H + L-cysteine = (sulfur carrier)-SH + L-alanine. It participates in cofactor biosynthesis; iron-sulfur cluster biosynthesis. In terms of biological role, master enzyme that delivers sulfur to a number of partners involved in Fe-S cluster assembly, tRNA modification or cofactor biosynthesis. Catalyzes the removal of elemental sulfur atoms from cysteine to produce alanine. Functions as a sulfur delivery protein for Fe-S cluster synthesis onto IscU, an Fe-S scaffold assembly protein, as well as other S acceptor proteins. In Klebsiella pneumoniae subsp. pneumoniae (strain ATCC 700721 / MGH 78578), this protein is Cysteine desulfurase IscS.